The sequence spans 233 residues: AA9 family lytic polysaccharide monooxygenase A (233 aa).

A signal peptide spans 1–17 (MKLTTSVALLAAAGAQA). 2 residues coordinate Cu(2+): histidine 18 and histidine 90. 2 cysteine pairs are disulfide-bonded: cysteine 59–cysteine 180 and cysteine 150–cysteine 233. Asparagine 132 carries N-linked (GlcNAc...) asparagine glycosylation. Residues histidine 166 and glutamine 175 each coordinate O2. Tyrosine 177 is a binding site for Cu(2+).

It belongs to the polysaccharide monooxygenase AA9 family. It depends on Cu(2+) as a cofactor.

It localises to the secreted. It carries out the reaction [(1-&gt;4)-beta-D-glucosyl]n+m + reduced acceptor + O2 = 4-dehydro-beta-D-glucosyl-[(1-&gt;4)-beta-D-glucosyl]n-1 + [(1-&gt;4)-beta-D-glucosyl]m + acceptor + H2O.. Lytic polysaccharide monooxygenase (LPMO) that depolymerizes crystalline and amorphous polysaccharides via the oxidation of scissile alpha- or beta-(1-4)-glycosidic bonds, yielding C1 and C4 oxidation products. Catalysis by LPMOs requires the reduction of the active-site copper from Cu(II) to Cu(I) by a reducing agent and H(2)O(2) or O(2) as a cosubstrate. Shows endoglucanase activity on tamarind xyloglucan, as well as on beechwood xylan when combined with phosphoric acid swollen cellulose (PASC). Shows no activity on wheat arabinoxylan, konjac glucomannan, acetylated spruce galactoglucomannan, or cellopentaose. The protein is AA9 family lytic polysaccharide monooxygenase A of Thermothielavioides terrestris (strain ATCC 38088 / NRRL 8126) (Thielavia terrestris).